The chain runs to 21 residues: Neuropeptide gamma (21 aa).

The segment at 1–21 is disordered; the sequence is SSANPQITRKRHKINSFVGLM. Met-21 carries the methionine amide modification.

Belongs to the tachykinin family.

Its subcellular location is the secreted. Tachykinins are active peptides which excite neurons, evoke behavioral responses, and contract (directly or indirectly) many smooth muscles. Is a potent vasoconstrictor and secretagogue that plays a regulatory role in the central control of ventilation, in particular, the heart rate variability (HRV). This chain is Neuropeptide gamma, found in Oncorhynchus mykiss (Rainbow trout).